An 889-amino-acid polypeptide reads, in one-letter code: Coatomer subunit beta' (889 aa).

WD repeat units follow at residues 11-41 (NRSD…ELWN), 53-83 (VTET…RVFN), 95-125 (AHPD…KLWN), 138-169 (GHEH…KVWS), 182-214 (GQER…KIWD), and 226-256 (GHMS…KIWN). Serine 326 is modified (phosphoserine). Positions 806 to 889 (CGAEGLPGSS…AVPEPVEEES (84 aa)) are disordered. Over residues 836–864 (DENKEAEVEDSEFKESNSEAVEAEKKEEE) the composition is skewed to basic and acidic residues. The span at 866–879 (PQQQQSEQQPEQGE) shows a compositional bias: low complexity.

This sequence belongs to the WD repeat COPB2 family. Oligomeric complex that consists of at least the alpha, beta, beta', gamma, delta, epsilon and zeta subunits. Interacts with the ESCRT-0 subunit VPS27.

The protein resides in the cytoplasm. It is found in the golgi apparatus membrane. Its subcellular location is the cytoplasmic vesicle. It localises to the COPI-coated vesicle membrane. Functionally, the coatomer is a cytosolic protein complex that binds to dilysine motifs and reversibly associates with Golgi non-clathrin-coated vesicles, which further mediate biosynthetic protein transport from the ER, via the Golgi up to the trans Golgi network. Coatomer complex is required for budding from Golgi membranes, and is essential for the retrograde Golgi-to-ER transport of dilysine-tagged proteins. The sequence is that of Coatomer subunit beta' (SEC27) from Saccharomyces cerevisiae (strain ATCC 204508 / S288c) (Baker's yeast).